The sequence spans 477 residues: Glutamyl-tRNA(Gln) amidotransferase subunit A (477 aa).

Active-site charge relay system residues include K68 and S143. The Acyl-ester intermediate role is filled by S167.

It belongs to the amidase family. GatA subfamily. Heterotrimer of A, B and C subunits.

The catalysed reaction is L-glutamyl-tRNA(Gln) + L-glutamine + ATP + H2O = L-glutaminyl-tRNA(Gln) + L-glutamate + ADP + phosphate + H(+). Functionally, allows the formation of correctly charged Gln-tRNA(Gln) through the transamidation of misacylated Glu-tRNA(Gln) in organisms which lack glutaminyl-tRNA synthetase. The reaction takes place in the presence of glutamine and ATP through an activated gamma-phospho-Glu-tRNA(Gln). The protein is Glutamyl-tRNA(Gln) amidotransferase subunit A (gatA) of Mycoplasma genitalium (strain ATCC 33530 / DSM 19775 / NCTC 10195 / G37) (Mycoplasmoides genitalium).